The following is a 585-amino-acid chain: MPTALCPRVLAPKESEEPRKMRSPPGENPSPQGEPPSPESSRRLFRRFRYQEAAGPREALQRLWELCRGWLRLERHTKEQILELLVLEQFLAILPWEIQSWVRAQEPESGEQAVAAVEALEREPGRPWQWLKHCEDPVVIDDGDGPAAPQDLEQERMSAESQSYPDAPPGALVQGTGLLSRSPGQPSEDLVPQDAFVVQEQSIRDAQPVATCQLPPNRVSPFKDMILCFSEEDWSLLDPAQTGFYGEFIIGEDYAVSMPPNEPPVQPGHSHEEENGLRVTEWTTDLQDKEIPQASCLDLSSLQPFQGEERRKWEELQVPELQPCPQVVLSQSPCPAGGDPPALKSSLDQEVTIEIVLSSSGDEDSQHSPYCTEELRSPPEDLHSVPAHQSNASAEGEVQTSQKSYVCPNCGKIFRWRVNFIRHLRSRREQKPHKCSVCGELFSDSEDLDGHLETHEAQKPYRCTACGKSFRLNSHLISHRRIHLQPASQQPMKKSEEEALETEGTGASDLLEKSKAKLSFQCGDCEKSFQRHDHLVRHRRHCHLKDETRPFQCRYCVKTFRQNYDLLRHERLHMKRRSKQALNSY.

The interval 1–41 (MPTALCPRVLAPKESEEPRKMRSPPGENPSPQGEPPSPESS) is disordered. The span at 11 to 20 (APKESEEPRK) shows a compositional bias: basic and acidic residues. Residue lysine 13 forms a Glycyl lysine isopeptide (Lys-Gly) (interchain with G-Cter in SUMO2) linkage. The span at 26 to 38 (GENPSPQGEPPSP) shows a compositional bias: pro residues. The SCAN box domain maps to 42 to 124 (RRLFRRFRYQ…AAVEALEREP (83 aa)). The tract at residues 141–167 (DDGDGPAAPQDLEQERMSAESQSYPDA) is disordered. At serine 182 the chain carries Phosphoserine. In terms of domain architecture, KRAB spans 220–294 (SPFKDMILCF…DLQDKEIPQA (75 aa)). Positions 358-397 (SSSGDEDSQHSPYCTEELRSPPEDLHSVPAHQSNASAEGE) are disordered. The segment covering 373–383 (EELRSPPEDLH) has biased composition (basic and acidic residues). Residues 387 to 397 (AHQSNASAEGE) show a composition bias toward polar residues. The segment at 405-427 (YVCPNCGKIFRWRVNFIRHLRSR) adopts a C2H2-type 1; degenerate zinc-finger fold. C2H2-type zinc fingers lie at residues 433–455 (HKCSVCGELFSDSEDLDGHLETH) and 461–483 (YRCTACGKSFRLNSHLISHRRIH). Residues 483–506 (HLQPASQQPMKKSEEEALETEGTG) are disordered. Lysine 494 participates in a covalent cross-link: Glycyl lysine isopeptide (Lys-Gly) (interchain with G-Cter in SUMO2). C2H2-type zinc fingers lie at residues 520–543 (FQCGDCEKSFQRHDHLVRHRRHCH) and 551–573 (FQCRYCVKTFRQNYDLLRHERLH). Positions 575–579 (KRRSK) match the Nuclear localization signal motif.

This sequence belongs to the krueppel C2H2-type zinc-finger protein family. In terms of assembly, interacts (via zinc-fingers) with JARID2. Interacts with NSD1.

Its subcellular location is the nucleus. Its function is as follows. DNA-binding transcription factor that can both act as an activator and a repressor. The protein is Zinc finger protein 496 (Znf496) of Mus musculus (Mouse).